The primary structure comprises 99 residues: Integration host factor subunit alpha (99 aa).

The disordered stretch occupies residues 49 to 75 (FGNFDLRDKNQRPGRNPKTGEDIPITA).

It belongs to the bacterial histone-like protein family. As to quaternary structure, heterodimer of an alpha and a beta chain.

Functionally, this protein is one of the two subunits of integration host factor, a specific DNA-binding protein that functions in genetic recombination as well as in transcriptional and translational control. The polypeptide is Integration host factor subunit alpha (Klebsiella pneumoniae (strain 342)).